An 84-amino-acid polypeptide reads, in one-letter code: Large ribosomal subunit protein bL27 (84 aa).

The protein belongs to the bacterial ribosomal protein bL27 family.

This Karelsulcia muelleri (strain GWSS) (Sulcia muelleri) protein is Large ribosomal subunit protein bL27.